A 143-amino-acid chain; its full sequence is Nucleoside diphosphate kinase (143 aa).

ATP is bound by residues lysine 11, phenylalanine 59, arginine 87, threonine 93, arginine 104, and asparagine 114. Catalysis depends on histidine 117, which acts as the Pros-phosphohistidine intermediate.

It belongs to the NDK family. In terms of assembly, homotetramer. Requires Mg(2+) as cofactor.

It localises to the cytoplasm. The enzyme catalyses a 2'-deoxyribonucleoside 5'-diphosphate + ATP = a 2'-deoxyribonucleoside 5'-triphosphate + ADP. It catalyses the reaction a ribonucleoside 5'-diphosphate + ATP = a ribonucleoside 5'-triphosphate + ADP. Its function is as follows. Major role in the synthesis of nucleoside triphosphates other than ATP. The ATP gamma phosphate is transferred to the NDP beta phosphate via a ping-pong mechanism, using a phosphorylated active-site intermediate. In Escherichia coli O7:K1 (strain IAI39 / ExPEC), this protein is Nucleoside diphosphate kinase.